A 357-amino-acid polypeptide reads, in one-letter code: 3-isopropylmalate dehydrogenase (357 aa).

Positions 97, 107, 135, and 224 each coordinate substrate. The Mg(2+) site is built by D224, D248, and D252. NAD(+) is bound at residue G282–N294.

The protein belongs to the isocitrate and isopropylmalate dehydrogenases family. LeuB type 1 subfamily. As to quaternary structure, homodimer. It depends on Mg(2+) as a cofactor. Requires Mn(2+) as cofactor.

The protein resides in the cytoplasm. The enzyme catalyses (2R,3S)-3-isopropylmalate + NAD(+) = 4-methyl-2-oxopentanoate + CO2 + NADH. The protein operates within amino-acid biosynthesis; L-leucine biosynthesis; L-leucine from 3-methyl-2-oxobutanoate: step 3/4. Catalyzes the oxidation of 3-carboxy-2-hydroxy-4-methylpentanoate (3-isopropylmalate) to 3-carboxy-4-methyl-2-oxopentanoate. The product decarboxylates to 4-methyl-2 oxopentanoate. This is 3-isopropylmalate dehydrogenase from Prochlorococcus marinus (strain MIT 9312).